The primary structure comprises 162 residues: Interleukin-15 (162 aa).

Positions methionine 1 to alanine 29 are cleaved as a signal peptide. The propeptide occupies glycine 30–alanine 48. 2 disulfide bridges follow: cysteine 83–cysteine 133 and cysteine 90–cysteine 136. 3 N-linked (GlcNAc...) asparagine glycosylation sites follow: asparagine 113, asparagine 121, and asparagine 127.

It belongs to the IL-15/IL-21 family.

Its subcellular location is the secreted. In terms of biological role, cytokine that plays a major role in the development of inflammatory and protective immune responses to microbial invaders and parasites by modulating immune cells of both the innate and adaptive immune systems. Stimulates the proliferation of natural killer cells, T-cells and B-cells and promotes the secretion of several cytokines. In monocytes, induces the production of IL8 and monocyte chemotactic protein 1/CCL2, two chemokines that attract neutrophils and monocytes respectively to sites of infection. Unlike most cytokines, which are secreted in soluble form, IL15 is expressed in association with its high affinity IL15RA on the surface of IL15-producing cells and delivers signals to target cells that express IL2RB and IL2RG receptor subunits. Binding to its receptor triggers the phosphorylation of JAK1 and JAK3 and the recruitment and subsequent phosphorylation of signal transducer and activator of transcription-3/STAT3 and STAT5. In mast cells, induces the rapid tyrosine phosphorylation of STAT6 and thereby controls mast cell survival and release of cytokines such as IL4. The chain is Interleukin-15 (IL15) from Ovis aries (Sheep).